The chain runs to 78 residues: uncharacterized protein (78 aa).

This is an uncharacterized protein from Escherichia coli (strain K12).